The following is a 152-amino-acid chain: Deoxyuridine 5'-triphosphate nucleotidohydrolase (152 aa).

Residues 71-73 (RSG), asparagine 84, 88-90 (LID), and methionine 98 contribute to the substrate site.

The protein belongs to the dUTPase family. Requires Mg(2+) as cofactor.

It catalyses the reaction dUTP + H2O = dUMP + diphosphate + H(+). Its pathway is pyrimidine metabolism; dUMP biosynthesis; dUMP from dCTP (dUTP route): step 2/2. This enzyme is involved in nucleotide metabolism: it produces dUMP, the immediate precursor of thymidine nucleotides and it decreases the intracellular concentration of dUTP so that uracil cannot be incorporated into DNA. This Coxiella burnetii (strain RSA 331 / Henzerling II) protein is Deoxyuridine 5'-triphosphate nucleotidohydrolase.